The following is a 428-amino-acid chain: Divergent protein kinase domain 1A (428 aa).

Over 1-27 (MARGLFSRAWLSKTHHFQARLSYIRVK) the chain is Cytoplasmic. The chain crosses the membrane as a helical span at residues 28-48 (YLFLTWLAVFVSSWVVYVQYS). Residues 49–428 (TYTELCRGRE…WKQISHTTDS (380 aa)) lie on the Lumenal side of the membrane.

This sequence belongs to the DIPK family. In terms of processing, among the many cysteines in the lumenal domain, most are probably involved in disulfide bonds.

Its subcellular location is the endoplasmic reticulum membrane. The protein is Divergent protein kinase domain 1A (dipk1a) of Danio rerio (Zebrafish).